The chain runs to 215 residues: Orotate phosphoribosyltransferase (215 aa).

Lys26 contacts 5-phospho-alpha-D-ribose 1-diphosphate. 34–35 (FF) is an orotate binding site. Residues 72 to 73 (YK), Arg99, Lys100, Lys103, His105, and 124 to 132 (DDVITAGTA) each bind 5-phospho-alpha-D-ribose 1-diphosphate. 2 residues coordinate orotate: Thr128 and Arg156.

It belongs to the purine/pyrimidine phosphoribosyltransferase family. PyrE subfamily. Homodimer. Requires Mg(2+) as cofactor.

The catalysed reaction is orotidine 5'-phosphate + diphosphate = orotate + 5-phospho-alpha-D-ribose 1-diphosphate. Its pathway is pyrimidine metabolism; UMP biosynthesis via de novo pathway; UMP from orotate: step 1/2. Functionally, catalyzes the transfer of a ribosyl phosphate group from 5-phosphoribose 1-diphosphate to orotate, leading to the formation of orotidine monophosphate (OMP). In Hahella chejuensis (strain KCTC 2396), this protein is Orotate phosphoribosyltransferase.